Reading from the N-terminus, the 232-residue chain is Ubiquinone biosynthesis O-methyltransferase (232 aa).

Residues R36, G55, D76, and M120 each coordinate S-adenosyl-L-methionine.

This sequence belongs to the methyltransferase superfamily. UbiG/COQ3 family.

The enzyme catalyses a 3-demethylubiquinol + S-adenosyl-L-methionine = a ubiquinol + S-adenosyl-L-homocysteine + H(+). It catalyses the reaction a 3-(all-trans-polyprenyl)benzene-1,2-diol + S-adenosyl-L-methionine = a 2-methoxy-6-(all-trans-polyprenyl)phenol + S-adenosyl-L-homocysteine + H(+). Its pathway is cofactor biosynthesis; ubiquinone biosynthesis. Its function is as follows. O-methyltransferase that catalyzes the 2 O-methylation steps in the ubiquinone biosynthetic pathway. In Burkholderia mallei (strain ATCC 23344), this protein is Ubiquinone biosynthesis O-methyltransferase.